We begin with the raw amino-acid sequence, 146 residues long: VHLTGEEKAAVTALWGKVNVDEVGGEALGRLLVVYPWTQRFFDSFGDLSSPDAVMNNPKVKAHGKKVLGAFSDGLAHLDNLKGTFAQLSELHCDKLHVDPENFRLLGNVLVCVLAHHFGKEFTPQVQAAYQKVVAGVANALAHKYH.

Residue V1 is modified to N-acetylvaline. A Globin domain is found at 2–146; it reads HLTGEEKAAV…VANALAHKYH (145 aa). Residue T12 is modified to Phosphothreonine. S44 carries the post-translational modification Phosphoserine. K59 carries the N6-acetyllysine modification. H63 is a binding site for heme b. An N6-acetyllysine modification is found at K82. H92 serves as a coordination point for heme b. S-nitrosocysteine is present on C93. K144 bears the N6-acetyllysine mark.

The protein belongs to the globin family. As to quaternary structure, heterotetramer of two alpha chains and two beta chains. In terms of tissue distribution, red blood cells.

Involved in oxygen transport from the lung to the various peripheral tissues. This chain is Hemoglobin subunit beta (HBB), found in Aotus trivirgatus (Three-striped night monkey).